We begin with the raw amino-acid sequence, 183 residues long: Non-specific lipid transfer protein GPI-anchored 15 (183 aa).

Positions 1–24 are cleaved as a signal peptide; sequence MGYRRSYAITFVALVAALWSVTKA. Cystine bridges form between Cys-30–Cys-71, Cys-40–Cys-55, Cys-56–Cys-97, and Cys-69–Cys-107. N-linked (GlcNAc...) asparagine glycosylation is found at Asn-47 and Asn-86. The segment at 108–158 is disordered; it reads NAATGPTAQPPAPSPTEKTPDVTLTPTSLPGARSGVGGGSKTVPSVGTGSS. The segment covering 149 to 158 has biased composition (polar residues); it reads TVPSVGTGSS. A lipid anchor (GPI-anchor amidated serine) is attached at Ser-158. Residues 159-183 constitute a propeptide, removed in mature form; sequence SRNVDPLPLHFLMFAVLVVCTSSFL.

This sequence belongs to the plant LTP family. As to expression, expressed in seedlings, preferentially in the endodermis of hypocotyls and roots. Also observed in siliques.

Its subcellular location is the cell membrane. In terms of biological role, probable lipid transfer protein. The protein is Non-specific lipid transfer protein GPI-anchored 15 of Arabidopsis thaliana (Mouse-ear cress).